We begin with the raw amino-acid sequence, 351 residues long: S-adenosylmethionine:tRNA ribosyltransferase-isomerase (351 aa).

This sequence belongs to the QueA family. In terms of assembly, monomer.

The protein resides in the cytoplasm. The enzyme catalyses 7-aminomethyl-7-carbaguanosine(34) in tRNA + S-adenosyl-L-methionine = epoxyqueuosine(34) in tRNA + adenine + L-methionine + 2 H(+). It participates in tRNA modification; tRNA-queuosine biosynthesis. Its function is as follows. Transfers and isomerizes the ribose moiety from AdoMet to the 7-aminomethyl group of 7-deazaguanine (preQ1-tRNA) to give epoxyqueuosine (oQ-tRNA). The polypeptide is S-adenosylmethionine:tRNA ribosyltransferase-isomerase (Phocaeicola vulgatus (strain ATCC 8482 / DSM 1447 / JCM 5826 / CCUG 4940 / NBRC 14291 / NCTC 11154) (Bacteroides vulgatus)).